A 151-amino-acid chain; its full sequence is Regulatory protein RecX (151 aa).

This sequence belongs to the RecX family.

The protein localises to the cytoplasm. Functionally, modulates RecA activity. The chain is Regulatory protein RecX from Actinobacillus pleuropneumoniae serotype 5b (strain L20).